A 63-amino-acid polypeptide reads, in one-letter code: Large ribosomal subunit protein uL29 (63 aa).

The protein belongs to the universal ribosomal protein uL29 family.

This Aliarcobacter butzleri (strain RM4018) (Arcobacter butzleri) protein is Large ribosomal subunit protein uL29.